A 365-amino-acid polypeptide reads, in one-letter code: L-lactate oxidase (365 aa).

The FMN hydroxy acid dehydrogenase domain maps to Arg6–Cys365. Tyr32 provides a ligand contact to pyruvate. Residues Pro85 to Ala87, Ser114, and Gln135 contribute to the FMN site. Tyr137 lines the pyruvate pocket. 3 residues coordinate FMN: Thr163, Lys237, and Ser259. Pyruvate is bound by residues His261 and Arg264. His261 serves as the catalytic Proton acceptor. FMN contacts are provided by residues Asp292 to Arg296 and Arg316.

The protein belongs to the FMN-dependent alpha-hydroxy acid dehydrogenase family. In terms of assembly, homotetramer. It depends on FMN as a cofactor.

It catalyses the reaction (S)-lactate + O2 = pyruvate + H2O2. It carries out the reaction glycolate + O2 = glyoxylate + H2O2. Catalyzes the oxidation of (S)-lactate (L-lactate) to pyruvate, with a reduction of O2 to H2O2. To a lesser extent is also able to use glycolate as substrate. This chain is L-lactate oxidase, found in Alicycliphilus denitrificans (strain DSM 14773 / CIP 107495 / K601).